Reading from the N-terminus, the 756-residue chain is Transient receptor potential cation channel subfamily V member 2 (756 aa).

The disordered stretch occupies residues 1–45 (MTSASNPPAFRLETSDGDEEGSAEVNKGKNEPPPMESPFQGEDRN). Residues 1 to 385 (MTSASNPPAF…LLQEKWDRLI (385 aa)) are required for interaction with SLC50A1. Over 1–387 (MTSASNPPAF…QEKWDRLIPR (387 aa)) the chain is Cytoplasmic. Ser15 and Ser77 each carry phosphoserine. ANK repeat units lie at residues 68–110 (NRFD…TEGS), 111–157 (TGKT…DEFY), 158–203 (RGHS…TCFY), 204–239 (FGELPLSLAACTKQWDVVTYLLENPHQPASLEATDS), 240–288 (LGNT…ICNH), and 289–315 (QGLTPLKLAAKEGKIEIFRHILQREFS). The chain crosses the membrane as a helical span at residues 388–408 (FFFNFACYLVYMIIFTIVAYH). Residues 409–428 (QPSLEQPAIPSSKATFGDSM) lie on the Extracellular side of the membrane. A helical membrane pass occupies residues 429 to 449 (LLLGHILILLGGIYLLLGQLW). Residues 450–455 (YFWRRR) are Cytoplasmic-facing. The chain crosses the membrane as a helical span at residues 456 to 476 (LFIWISFMDSYFEILFLVQAL). Residues 477 to 490 (LTVLSQVLRFVETE) are Extracellular-facing. A helical membrane pass occupies residues 491-511 (WYLPLLVSSLVLGWLNLLYYT). Residues 512 to 532 (RGFQHTGIYSVMIQKVILRDL) lie on the Cytoplasmic side of the membrane. The chain crosses the membrane as a helical span at residues 533 to 553 (LRFLLVYLVFLFGFAVALVSL). Positions 559 to 583 (SPKAPEDSNTTVTEKPTLGQEEEPV) are disordered. A glycan (N-linked (GlcNAc...) asparagine) is linked at Asn567. The pore-forming intramembrane region spans 568-604 (TTVTEKPTLGQEEEPVPYGGILDASLELFKFTIGMGE). A helical transmembrane segment spans residues 617 to 637 (VLLLLLAYVLLTYVLLLNMLI). At 638-756 (ALMSETVNSV…HLPLQVLQSH (119 aa)) the chain is on the cytoplasmic side. The tract at residues 719–756 (EDPSGAGITGYKKNPTSKPGKNSASEEDHLPLQVLQSH) is disordered. The span at 732 to 741 (NPTSKPGKNS) shows a compositional bias: polar residues. Phosphoserine occurs at positions 743 and 755.

It belongs to the transient receptor (TC 1.A.4) family. TrpV subfamily. TRPV2 sub-subfamily. As to quaternary structure, homotetramer. Interacts with a cAMP-dependent protein kinase type II regulatory subunit (PRKAR2A or PRKAR2B) and ACBD3. Interacts with SLC50A1; the interaction probably occurs intracellularly and depends on TRPV2 N-glycosylation. In terms of processing, N-glycosylated. Phosphorylated by PKA. In terms of tissue distribution, abundantly expressed in spleen, placenta, skeleton muscle, lung and brain.

It localises to the cell membrane. It is found in the cytoplasm. Its subcellular location is the melanosome. The enzyme catalyses Ca(2+)(in) = Ca(2+)(out). It catalyses the reaction Mg(2+)(in) = Mg(2+)(out). It carries out the reaction Na(+)(in) = Na(+)(out). The catalysed reaction is K(+)(in) = K(+)(out). In terms of biological role, calcium-permeable, non-selective cation channel with an outward rectification. Seems to be regulated, at least in part, by IGF1, PDGF and neuropeptide head activator. May transduce physical stimuli in mast cells. Activated by temperatures higher than 52 degrees Celsius; is not activated by vanilloids and acidic pH. The sequence is that of Transient receptor potential cation channel subfamily V member 2 (Trpv2) from Mus musculus (Mouse).